The following is a 1349-amino-acid chain: DNA-directed RNA polymerase subunit beta' (1349 aa).

Residues C70, C72, C85, and C88 each coordinate Zn(2+). Positions 460, 462, and 464 each coordinate Mg(2+). Zn(2+)-binding residues include C801, C875, C882, and C885.

The protein belongs to the RNA polymerase beta' chain family. In terms of assembly, the RNAP catalytic core consists of 2 alpha, 1 beta, 1 beta' and 1 omega subunit. When a sigma factor is associated with the core the holoenzyme is formed, which can initiate transcription. It depends on Mg(2+) as a cofactor. Requires Zn(2+) as cofactor.

It catalyses the reaction RNA(n) + a ribonucleoside 5'-triphosphate = RNA(n+1) + diphosphate. Its function is as follows. DNA-dependent RNA polymerase catalyzes the transcription of DNA into RNA using the four ribonucleoside triphosphates as substrates. This chain is DNA-directed RNA polymerase subunit beta', found in Desulfotalea psychrophila (strain LSv54 / DSM 12343).